A 301-amino-acid polypeptide reads, in one-letter code: Methionyl-tRNA formyltransferase (301 aa).

109–112 serves as a coordination point for (6S)-5,6,7,8-tetrahydrofolate; sequence SLLP.

The protein belongs to the Fmt family.

The catalysed reaction is L-methionyl-tRNA(fMet) + (6R)-10-formyltetrahydrofolate = N-formyl-L-methionyl-tRNA(fMet) + (6S)-5,6,7,8-tetrahydrofolate + H(+). In terms of biological role, attaches a formyl group to the free amino group of methionyl-tRNA(fMet). The formyl group appears to play a dual role in the initiator identity of N-formylmethionyl-tRNA by promoting its recognition by IF2 and preventing the misappropriation of this tRNA by the elongation apparatus. The chain is Methionyl-tRNA formyltransferase from Anaplasma marginale (strain St. Maries).